Here is a 161-residue protein sequence, read N- to C-terminus: Anaerobic nitrite reductase HB2 (161 aa).

Residues valine 5 to lysine 154 enclose the Globin domain. The Homodimerization motif lies at glutamate 38 to alanine 42. Heme b contacts are provided by serine 48, lysine 62, histidine 66, and histidine 101. Positions aspartate 108 to arginine 120 match the Homodimerization motif.

This sequence belongs to the plant globin family. Homodimer. It depends on heme b as a cofactor.

It is found in the cytoplasm. The protein localises to the nucleus. The catalysed reaction is Fe(III)-heme b-[protein] + nitric oxide + H2O = Fe(II)-heme b-[protein] + nitrite + 2 H(+). Its function is as follows. Phytoglobin that reduces nitrite to nitric oxide (NO) under anoxic conditions (e.g. during flooding or in waterlogged soil). May not function as an oxygen storage or transport protein. Has an unusually high affinity for O(2) through an hexacoordinate heme iron because of a very low dissociation constant. This Brassica napus (Rape) protein is Anaerobic nitrite reductase HB2.